Consider the following 455-residue polypeptide: Hydroxymethylglutaryl-CoA synthase 2 (455 aa).

The Proton donor/acceptor role is filled by glutamate 86. The Acyl-thioester intermediate role is filled by cysteine 120. Residues cysteine 120, threonine 161, serine 211, histidine 255, lysine 264, asparagine 329, and serine 363 each coordinate (3S)-3-hydroxy-3-methylglutaryl-CoA. The active-site Proton donor/acceptor is the histidine 255.

This sequence belongs to the thiolase-like superfamily. HMG-CoA synthase family.

It catalyses the reaction acetoacetyl-CoA + acetyl-CoA + H2O = (3S)-3-hydroxy-3-methylglutaryl-CoA + CoA + H(+). It participates in metabolic intermediate biosynthesis; (R)-mevalonate biosynthesis; (R)-mevalonate from acetyl-CoA: step 2/3. This enzyme condenses acetyl-CoA with acetoacetyl-CoA to form HMG-CoA, which is the substrate for HMG-CoA reductase. The polypeptide is Hydroxymethylglutaryl-CoA synthase 2 (HMGCS-2) (Blattella germanica (German cockroach)).